The following is a 322-amino-acid chain: Tubulin alpha-4 chain (322 aa).

Serine 15, glycine 19, threonine 20, threonine 54, asparagine 81, and asparagine 103 together coordinate GTP. Glutamate 129 is an active-site residue.

This sequence belongs to the tubulin family. Dimer of alpha and beta chains. A typical microtubule is a hollow water-filled tube with an outer diameter of 25 nm and an inner diameter of 15 nM. Alpha-beta heterodimers associate head-to-tail to form protofilaments running lengthwise along the microtubule wall with the beta-tubulin subunit facing the microtubule plus end conferring a structural polarity. Microtubules usually have 13 protofilaments but different protofilament numbers can be found in some organisms and specialized cells. Mg(2+) serves as cofactor. Some glutamate residues at the C-terminus are polyglycylated, resulting in polyglycine chains on the gamma-carboxyl group. Glycylation is mainly limited to tubulin incorporated into axonemes (cilia and flagella) whereas glutamylation is prevalent in neuronal cells, centrioles, axonemes, and the mitotic spindle. Both modifications can coexist on the same protein on adjacent residues, and lowering polyglycylation levels increases polyglutamylation, and reciprocally. The precise function of polyglycylation is still unclear. Post-translationally, some glutamate residues at the C-terminus are polyglutamylated, resulting in polyglutamate chains on the gamma-carboxyl group. Polyglutamylation plays a key role in microtubule severing by spastin (SPAST). SPAST preferentially recognizes and acts on microtubules decorated with short polyglutamate tails: severing activity by SPAST increases as the number of glutamates per tubulin rises from one to eight, but decreases beyond this glutamylation threshold.

It localises to the cytoplasm. Its subcellular location is the cytoskeleton. The catalysed reaction is GTP + H2O = GDP + phosphate + H(+). Its function is as follows. Tubulin is the major constituent of microtubules, a cylinder consisting of laterally associated linear protofilaments composed of alpha- and beta-tubulin heterodimers. Microtubules grow by the addition of GTP-tubulin dimers to the microtubule end, where a stabilizing cap forms. Below the cap, tubulin dimers are in GDP-bound state, owing to GTPase activity of alpha-tubulin. This is Tubulin alpha-4 chain from Gallus gallus (Chicken).